The sequence spans 150 residues: D-aminoacyl-tRNA deacylase (150 aa).

Residues Gly-138–Pro-139 carry the Gly-cisPro motif, important for rejection of L-amino acids motif.

It belongs to the DTD family. As to quaternary structure, homodimer.

The protein localises to the cytoplasm. It catalyses the reaction glycyl-tRNA(Ala) + H2O = tRNA(Ala) + glycine + H(+). The enzyme catalyses a D-aminoacyl-tRNA + H2O = a tRNA + a D-alpha-amino acid + H(+). Its function is as follows. An aminoacyl-tRNA editing enzyme that deacylates mischarged D-aminoacyl-tRNAs. Also deacylates mischarged glycyl-tRNA(Ala), protecting cells against glycine mischarging by AlaRS. Acts via tRNA-based rather than protein-based catalysis; rejects L-amino acids rather than detecting D-amino acids in the active site. By recycling D-aminoacyl-tRNA to D-amino acids and free tRNA molecules, this enzyme counteracts the toxicity associated with the formation of D-aminoacyl-tRNA entities in vivo and helps enforce protein L-homochirality. In Phocaeicola vulgatus (strain ATCC 8482 / DSM 1447 / JCM 5826 / CCUG 4940 / NBRC 14291 / NCTC 11154) (Bacteroides vulgatus), this protein is D-aminoacyl-tRNA deacylase.